Consider the following 221-residue polypeptide: Iron-sulfur cluster repair protein YtfE (221 aa).

The protein belongs to the RIC family. YtfE subfamily. In terms of assembly, homodimer.

It is found in the cytoplasm. Functionally, di-iron-containing protein involved in the repair of iron-sulfur clusters damaged by oxidative and nitrosative stress conditions. The polypeptide is Iron-sulfur cluster repair protein YtfE (Edwardsiella ictaluri (strain 93-146)).